The chain runs to 438 residues: sn-glycerol-3-phosphate-binding periplasmic protein UgpB (438 aa).

The N-terminal stretch at 1–23 is a signal peptide; that stretch reads MKPLHYTASALALGLALMGNAQA. Sn-glycerol 3-phosphate contacts are provided by tyrosine 65, glutamate 89, serine 144, serine 270, glycine 307, tyrosine 346, and arginine 397.

The protein belongs to the bacterial solute-binding protein 1 family. In terms of assembly, the complex is composed of two ATP-binding proteins (UgpC), two transmembrane proteins (UgpA and UgpE) and a solute-binding protein (UgpB).

It is found in the periplasm. In terms of biological role, part of the ABC transporter complex UgpBAEC involved in sn-glycerol-3-phosphate (G3P) import. Binds G3P. This chain is sn-glycerol-3-phosphate-binding periplasmic protein UgpB (ugpB), found in Shigella flexneri.